The following is a 340-amino-acid chain: MGGVAAGTRWIHHVRRLSAAKVSADALERGQSRVIDASLTLIRERAKLKAELLRALGGVKASACLLGVPLGHNSSFLQGPAFAPPRIREAIWCGSTNSSTEEGKELNDPRVLTDVGDVPIQEIRDCGVEDDRLMNVVSESVKTVMEEDPLRPLVLGGDHSISYPVVRAVSEKLGGPVDILHLDAHPDIYDAFEGNIYSHASSFARIMEGGYARRLLQVGIRSITKEGREQGKRFGVEQYEMRTFSKDREKLESLKLGEGVKGVYISVDVDCLDPAFAPGVSHIEPGGLSFRDVLNILHNLQGDVVAGDVVEFNPQRDTVDGMTAMVAAKLVRELTAKISK.

A mitochondrion-targeting transit peptide spans 1-24 (MGGVAAGTRWIHHVRRLSAAKVSA). Positions 159, 183, 185, and 187 each coordinate Mn(2+). Residues 185-189 (HPDIY) and 193-195 (EGN) contribute to the substrate site. Residues Asp268 and Asp270 each contribute to the Mn(2+) site. Residue Glu311 participates in substrate binding.

The protein belongs to the arginase family. Mn(2+) serves as cofactor.

The protein resides in the mitochondrion. It catalyses the reaction L-arginine + H2O = urea + L-ornithine. The protein operates within nitrogen metabolism; urea cycle; L-ornithine and urea from L-arginine: step 1/1. Catalyzes the hydrolysis of L-arginine to urea and L-ornithine. The latter can be utilized in the urea cycle or as a precursor for the synthesis of both polyamines and proline. This is Arginase 1, mitochondrial (ARG1) from Oryza sativa subsp. japonica (Rice).